Reading from the N-terminus, the 283-residue chain is MARRPRAPAASGEEFSFVSPLVKYLLFFFNMLFWVISMVMVAVGVYARLMKHAEAALACLAVDPAILLIVVGVLMFLLTFCGCIGSLRENICLLQTFSLCLTAVFLLQLAAGILGFVFSDKARGKVSEIINNAIVHYRDDLDLQNLIDFGQKKFSCCGGISYKDWSQNMYFNCSEDNPSRERCSVPYSCCLPTPDQAVINTMCGQGMQAFDYLEASKVIYTNGCIDKLVNWIHSNLFLLGGVALGLAIPQLVGILLSQILVNQIKDQIKLQLYNQQHRADPWY.

The Cytoplasmic segment spans residues 1-24 (MARRPRAPAASGEEFSFVSPLVKY). A helical membrane pass occupies residues 25 to 45 (LLFFFNMLFWVISMVMVAVGV). The Extracellular segment spans residues 46–64 (YARLMKHAEAALACLAVDP). Residues 65 to 85 (AILLIVVGVLMFLLTFCGCIG) traverse the membrane as a helical segment. At 86 to 96 (SLRENICLLQT) the chain is on the cytoplasmic side. The chain crosses the membrane as a helical span at residues 97–117 (FSLCLTAVFLLQLAAGILGFV). Residues 118–235 (FSDKARGKVS…DKLVNWIHSN (118 aa)) are Extracellular-facing. Intrachain disulfides connect C156-C224, C157-C189, C173-C183, and C190-C203. N172 carries N-linked (GlcNAc...) asparagine glycosylation. A helical transmembrane segment spans residues 236–256 (LFLLGGVALGLAIPQLVGILL). Residues 257 to 283 (SQILVNQIKDQIKLQLYNQQHRADPWY) lie on the Cytoplasmic side of the membrane.

The protein belongs to the tetraspanin (TM4SF) family. Homodimer; disulfide-linked. Interacts (via extracellular domain) with ADAM10 (via extracellular domain). Interacts (via cytoplasmic domain) with PLEKHA7 (via WW domains); the interaction is dependent on PDZD11 being bound to PLEKHA7 and facilitates the docking of ADAM10 to zonula adherens. As to expression, predominantly expressed in erythroblasts.

The protein resides in the cell membrane. It is found in the cell junction. Its subcellular location is the adherens junction. The protein localises to the cytoplasm. In terms of biological role, part of TspanC8 subgroup, composed of 6 members that interact with the transmembrane metalloprotease ADAM10. This interaction is required for ADAM10 exit from the endoplasmic reticulum and for enzymatic maturation and trafficking to the cell surface as well as substrate specificity. Different TspanC8/ADAM10 complexes have distinct substrates. Plays an important role in normal erythropoiesis. It has a role in the differentiation of erythroid progenitors. Negatively regulates ligand-induced Notch activity probably by regulating ADAM10 activity. Mediates docking of ADAM10 to zonula adherens by interacting with ADAM10 and, in a PDZD11-dependent manner, with the zonula adherens protein PLEKHA7. The protein is Tetraspanin-33 of Homo sapiens (Human).